Here is a 221-residue protein sequence, read N- to C-terminus: Chalcone--flavanone isomerase (221 aa).

Residues threonine 47, asparagine 112, and serine 189 each contribute to the substrate site.

The protein belongs to the chalcone isomerase family.

The enzyme catalyses a chalcone = a flavanone.. It functions in the pathway secondary metabolite biosynthesis; flavonoid biosynthesis. Its function is as follows. Catalyzes the intramolecular cyclization of bicyclic chalcones into tricyclic (S)-flavanones. Responsible for the isomerization of 4,2',4',6'-tetrahydroxychalcone (also termed chalcone) into naringenin. The sequence is that of Chalcone--flavanone isomerase (CHI) from Dianthus caryophyllus (Carnation).